Consider the following 291-residue polypeptide: Nucleotide-binding protein LGAS_1315 (291 aa).

Residue 13–20 participates in ATP binding; that stretch reads GMSGAGKT. Residue 63 to 66 coordinates GTP; the sequence is DLRV.

This sequence belongs to the RapZ-like family.

Displays ATPase and GTPase activities. The protein is Nucleotide-binding protein LGAS_1315 of Lactobacillus gasseri (strain ATCC 33323 / DSM 20243 / BCRC 14619 / CIP 102991 / JCM 1131 / KCTC 3163 / NCIMB 11718 / NCTC 13722 / AM63).